The following is a 228-amino-acid chain: Thermonuclease (228 aa).

Residues 1–23 (MTEYLLSAGICMAIVSILLIGMA) form the signal peptide. The propeptide occupies 24 to 60 (ISNVSKEQYAKRFFFFATSCLVLTLVVASSLSSSANA). Position 100 (Asp-100) interacts with Ca(2+). Arg-114 is a catalytic residue. Residues Asp-119 and Thr-120 each coordinate Ca(2+). Catalysis depends on residues Glu-122 and Arg-166.

The protein belongs to the thermonuclease family. Ca(2+) serves as cofactor.

It is found in the secreted. It carries out the reaction Endonucleolytic cleavage to nucleoside 3'-phosphates and 3'-phosphooligonucleotide end-products.. Functionally, enzyme that catalyzes the hydrolysis of both DNA and RNA at the 5' position of the phosphodiester bond. The sequence is that of Thermonuclease (nuc) from Staphylococcus aureus (strain MRSA252).